The following is a 448-amino-acid chain: Receptor homology region, transmembrane domain- and RING domain-containing protein 2 (448 aa).

A signal peptide spans 1–20 (MNRALVLLLYVCTVSCLASS). Residues 21–163 (KVILMRNNIT…IPSFENSAWS (143 aa)) are Lumenal-facing. 2 N-linked (GlcNAc...) asparagine glycosylation sites follow: Asn-28 and Asn-74. Positions 60 to 144 (DACQNLMNKP…ETGEVLKEYA (85 aa)) constitute a PA domain. A disulfide bond links Cys-62 and Cys-87. Residues 164 to 184 (IMAVSFISLLAMSAVLATCFF) traverse the membrane as a helical segment. Residues 185-448 (VRRHRIRRRT…YASANSLPDC (264 aa)) lie on the Cytoplasmic side of the membrane. The RING-type; atypical zinc-finger motif lies at 232–274 (CAICLEDYTVGDKLRLLPCCHKFHAACVDSWLTSWRTFCPVCK). Residues 344–378 (QSSSNRRSPPISVSRSSVDLRQQAASPSPSPSQRS) show a composition bias toward low complexity. Disordered regions lie at residues 344 to 380 (QSSS…RSYI) and 402 to 424 (MSPY…NYPL). A compositionally biased stretch (polar residues) spans 408 to 423 (SPSNASPAMAGSSNYP).

It localises to the protein storage vacuole membrane. The protein resides in the golgi apparatus membrane. Involved in the trafficking of vacuolar proteins. May function as a sorting receptor for protein trafficking to the protein storage vacuole (PSV). This is Receptor homology region, transmembrane domain- and RING domain-containing protein 2 (RMR2) from Arabidopsis thaliana (Mouse-ear cress).